The following is a 331-amino-acid chain: tRNA N6-adenosine threonylcarbamoyltransferase (331 aa).

Positions 107 and 111 each coordinate Fe cation. Residues 129-133, D162, G175, and N269 contribute to the substrate site; that span reads LVSGG. D297 serves as a coordination point for Fe cation.

Belongs to the KAE1 / TsaD family. Fe(2+) is required as a cofactor.

The protein resides in the cytoplasm. The catalysed reaction is L-threonylcarbamoyladenylate + adenosine(37) in tRNA = N(6)-L-threonylcarbamoyladenosine(37) in tRNA + AMP + H(+). In terms of biological role, required for the formation of a threonylcarbamoyl group on adenosine at position 37 (t(6)A37) in tRNAs that read codons beginning with adenine. Is involved in the transfer of the threonylcarbamoyl moiety of threonylcarbamoyl-AMP (TC-AMP) to the N6 group of A37, together with TsaE and TsaB. TsaD likely plays a direct catalytic role in this reaction. This chain is tRNA N6-adenosine threonylcarbamoyltransferase, found in Wolinella succinogenes (strain ATCC 29543 / DSM 1740 / CCUG 13145 / JCM 31913 / LMG 7466 / NCTC 11488 / FDC 602W) (Vibrio succinogenes).